A 388-amino-acid chain; its full sequence is Succinate--CoA ligase [ADP-forming] subunit beta (388 aa).

The region spanning Lys-9–Lys-245 is the ATP-grasp domain. Residues Lys-46, Gly-53–Gly-55, Glu-100, Tyr-103, and Glu-108 contribute to the ATP site. Mg(2+) is bound by residues Asn-200 and Asp-214. Substrate is bound by residues Asn-265 and Gly-322–Val-324.

The protein belongs to the succinate/malate CoA ligase beta subunit family. Heterotetramer of two alpha and two beta subunits. Mg(2+) serves as cofactor.

It carries out the reaction succinate + ATP + CoA = succinyl-CoA + ADP + phosphate. It catalyses the reaction GTP + succinate + CoA = succinyl-CoA + GDP + phosphate. It participates in carbohydrate metabolism; tricarboxylic acid cycle; succinate from succinyl-CoA (ligase route): step 1/1. Succinyl-CoA synthetase functions in the citric acid cycle (TCA), coupling the hydrolysis of succinyl-CoA to the synthesis of either ATP or GTP and thus represents the only step of substrate-level phosphorylation in the TCA. The beta subunit provides nucleotide specificity of the enzyme and binds the substrate succinate, while the binding sites for coenzyme A and phosphate are found in the alpha subunit. The polypeptide is Succinate--CoA ligase [ADP-forming] subunit beta (Psychrobacter cryohalolentis (strain ATCC BAA-1226 / DSM 17306 / VKM B-2378 / K5)).